A 147-amino-acid polypeptide reads, in one-letter code: Holo-[acyl-carrier-protein] synthase (147 aa).

2 residues coordinate Mg(2+): D7 and E60.

This sequence belongs to the P-Pant transferase superfamily. AcpS family. Requires Mg(2+) as cofactor.

The protein localises to the cytoplasm. The enzyme catalyses apo-[ACP] + CoA = holo-[ACP] + adenosine 3',5'-bisphosphate + H(+). Functionally, transfers the 4'-phosphopantetheine moiety from coenzyme A to a Ser of acyl-carrier-protein. The chain is Holo-[acyl-carrier-protein] synthase from Bifidobacterium animalis subsp. lactis (strain AD011).